The chain runs to 321 residues: MNNNYTSLKSSIDEEGELKTDHEIDLEKGLLPEYNSEEEGALPTYSDHARSSNPPNTHRENHSSGTTDDSSPFLIKLLISFTPIVLLNALAVCYLTYKDAFFKDYGAAEWTLFGFWCLVCTLALIILTYFYETWTKAVKVTAIGLFNIRREMMIIIWILWLIICCILFGCVKDGRLNLNKALIYSTCTISAVLFLIVSSVCIPMWTLWRALSGMLQVLGIHGIIALLVNGSMSLFGKHFGWRGYEIEGFVLFFTGNALFLYEMERPGVLKRMRNTTGNVIGYILEGIGNIGNAIGRIGNAFRGANDNNDIPLGEMEVESEV.

Residues 29–68 (GLLPEYNSEEEGALPTYSDHARSSNPPNTHRENHSSGTTD) form a disordered region. Helical transmembrane passes span 73 to 93 (FLIK…LAVC), 110 to 130 (WTLF…LTYF), 151 to 171 (EMMI…FGCV), 188 to 208 (TISA…WTLW), 210 to 230 (ALSG…LVNG), and 243 to 263 (GYEI…LYEM).

The protein belongs to the WTF family. Homomer. Interacts with other proteins that exhibit high sequence similarity.

The protein localises to the spore membrane. It is found in the vacuole membrane. Acts as a suppressor component of the dual wtf meiotic drive system, and can suppress but not confer meiotic drive by compatible poisons. Wtf meiotic drive systems promote unequal transmission of alleles from the parental zygote to progeny spores by encoding a poison and an antidote from the same locus; the poison is trans-acting and forms toxic aggregates in all spores within an ascus, wherease the antidote is spore-specific and targets aggregates for degradation by the vacuole. Meiotic drive by wtf systems therefore lead to poisoning of all progeny that do not inherit the dual poison/antidote allele, or express a compatible antidote. The polypeptide is Meiotic drive suppressor wtf26 (Schizosaccharomyces kambucha (Fission yeast)).